The primary structure comprises 264 residues: Indole-3-glycerol phosphate synthase (264 aa).

It belongs to the TrpC family.

The catalysed reaction is 1-(2-carboxyphenylamino)-1-deoxy-D-ribulose 5-phosphate + H(+) = (1S,2R)-1-C-(indol-3-yl)glycerol 3-phosphate + CO2 + H2O. Its pathway is amino-acid biosynthesis; L-tryptophan biosynthesis; L-tryptophan from chorismate: step 4/5. This is Indole-3-glycerol phosphate synthase from Xylella fastidiosa (strain M23).